Consider the following 334-residue polypeptide: Protein-methionine-sulfoxide reductase catalytic subunit MsrP (334 aa).

The segment at residues 1-44 (MKKNQFLKESDVTAESVFFMKRRQVLKALGISAAALSLPHAAHA) is a signal peptide (tat-type signal). Mo-molybdopterin contacts are provided by residues Asn-88, 91-92 (YE), Cys-146, Thr-181, Asn-233, Arg-238, and 249-251 (GIK).

It belongs to the MsrP family. In terms of assembly, heterodimer of a catalytic subunit (MsrP) and a heme-binding subunit (MsrQ). Mo-molybdopterin serves as cofactor. Post-translationally, predicted to be exported by the Tat system. The position of the signal peptide cleavage has not been experimentally proven.

The protein resides in the periplasm. It catalyses the reaction L-methionyl-[protein] + a quinone + H2O = L-methionyl-(S)-S-oxide-[protein] + a quinol. It carries out the reaction L-methionyl-[protein] + a quinone + H2O = L-methionyl-(R)-S-oxide-[protein] + a quinol. In terms of biological role, part of the MsrPQ system that repairs oxidized periplasmic proteins containing methionine sulfoxide residues (Met-O), using respiratory chain electrons. Thus protects these proteins from oxidative-stress damage caused by reactive species of oxygen and chlorine generated by the host defense mechanisms. MsrPQ is essential for the maintenance of envelope integrity under bleach stress, rescuing a wide series of structurally unrelated periplasmic proteins from methionine oxidation, including the primary periplasmic chaperone SurA and the lipoprotein Pal. The catalytic subunit MsrP is non-stereospecific, being able to reduce both (R-) and (S-) diastereoisomers of methionine sulfoxide. In Escherichia coli O17:K52:H18 (strain UMN026 / ExPEC), this protein is Protein-methionine-sulfoxide reductase catalytic subunit MsrP.